The following is a 515-amino-acid chain: E3 ubiquitin-protein ligase RNF217 (515 aa).

2 disordered regions span residues methionine 1 to glutamine 125 and proline 147 to leucine 189. Over residues glycine 10–alanine 22 the composition is skewed to gly residues. Low complexity-rich tracts occupy residues glycine 39 to proline 49 and proline 147 to proline 157. Positions serine 158–proline 178 are enriched in pro residues. Residues serine 179–leucine 189 are compositionally biased toward low complexity. The interval methionine 232 to tyrosine 451 is TRIAD supradomain. Zn(2+)-binding residues include cysteine 236, cysteine 239, cysteine 256, cysteine 259, cysteine 356, cysteine 359, histidine 364, cysteine 369, cysteine 396, and cysteine 399. The segment at cysteine 236–cysteine 282 adopts an RING-type 1 zinc-finger fold. Residues isoleucine 301–cysteine 369 form an IBR-type zinc finger. The RING-type 2; atypical zinc finger occupies cysteine 396 to cysteine 425. The active site involves cysteine 409. The Zn(2+) site is built by cysteine 414, cysteine 417, cysteine 422, cysteine 425, histidine 438, and cysteine 447. Residues leucine 476–phenylalanine 496 form a helical membrane-spanning segment.

The protein belongs to the RBR family. RNF217 subfamily. Interacts with HAX1.

Its subcellular location is the membrane. It is found in the cytoplasm. It catalyses the reaction [E2 ubiquitin-conjugating enzyme]-S-ubiquitinyl-L-cysteine + [acceptor protein]-L-lysine = [E2 ubiquitin-conjugating enzyme]-L-cysteine + [acceptor protein]-N(6)-ubiquitinyl-L-lysine.. It functions in the pathway protein modification; protein ubiquitination. In terms of biological role, E3 ubiquitin-protein ligase which accepts ubiquitin from E2 ubiquitin-conjugating enzymes in the form of a thioester and then directly transfers the ubiquitin to targeted substrates. Mediates the degradation of the iron exporter ferroportin/SLC40A1 and thus regulates iron homeostasis. The protein is E3 ubiquitin-protein ligase RNF217 (Rnf217) of Mus musculus (Mouse).